Consider the following 213-residue polypeptide: Ribosomal RNA large subunit methyltransferase E (213 aa).

5 residues coordinate S-adenosyl-L-methionine: glycine 60, tryptophan 62, aspartate 80, aspartate 96, and aspartate 121. Lysine 161 acts as the Proton acceptor in catalysis.

The protein belongs to the class I-like SAM-binding methyltransferase superfamily. RNA methyltransferase RlmE family.

The protein resides in the cytoplasm. The enzyme catalyses uridine(2552) in 23S rRNA + S-adenosyl-L-methionine = 2'-O-methyluridine(2552) in 23S rRNA + S-adenosyl-L-homocysteine + H(+). Functionally, specifically methylates the uridine in position 2552 of 23S rRNA at the 2'-O position of the ribose in the fully assembled 50S ribosomal subunit. The sequence is that of Ribosomal RNA large subunit methyltransferase E from Xylella fastidiosa (strain 9a5c).